The following is a 235-amino-acid chain: Aspartate/glutamate leucyltransferase (235 aa).

It belongs to the R-transferase family. Bpt subfamily.

Its subcellular location is the cytoplasm. The enzyme catalyses N-terminal L-glutamyl-[protein] + L-leucyl-tRNA(Leu) = N-terminal L-leucyl-L-glutamyl-[protein] + tRNA(Leu) + H(+). It catalyses the reaction N-terminal L-aspartyl-[protein] + L-leucyl-tRNA(Leu) = N-terminal L-leucyl-L-aspartyl-[protein] + tRNA(Leu) + H(+). In terms of biological role, functions in the N-end rule pathway of protein degradation where it conjugates Leu from its aminoacyl-tRNA to the N-termini of proteins containing an N-terminal aspartate or glutamate. In Pseudomonas entomophila (strain L48), this protein is Aspartate/glutamate leucyltransferase.